The primary structure comprises 525 residues: GMP synthase [glutamine-hydrolyzing] (525 aa).

A Glutamine amidotransferase type-1 domain is found at 9–207; it reads RILILDFGSQ…VRDICECEAL (199 aa). Cys86 acts as the Nucleophile in catalysis. Residues His181 and Glu183 contribute to the active site. The 193-residue stretch at 208–400 folds into the GMPS ATP-PPase domain; it reads WTPAKIIDDA…LGLPYDMLYR (193 aa). 235-241 provides a ligand contact to ATP; it reads SGGVDSS.

Homodimer.

It carries out the reaction XMP + L-glutamine + ATP + H2O = GMP + L-glutamate + AMP + diphosphate + 2 H(+). It functions in the pathway purine metabolism; GMP biosynthesis; GMP from XMP (L-Gln route): step 1/1. In terms of biological role, catalyzes the synthesis of GMP from XMP. This Cronobacter sakazakii (strain ATCC BAA-894) (Enterobacter sakazakii) protein is GMP synthase [glutamine-hydrolyzing].